A 199-amino-acid chain; its full sequence is DNA repair RAD52-like protein 2, chloroplastic (199 aa).

A chloroplast-targeting transit peptide spans 1–40; it reads MALQVQQTSAAFTISSPSTAAARIKLSPFRTVAVNRGVRC. Residue Ser41 is modified to N-acetylserine.

This sequence belongs to the RAD52 family. In terms of tissue distribution, expressed in roots and shoots. Expressed at low levels in cauline leaves, flower buds, flowers and siliques.

The protein resides in the plastid. Its subcellular location is the chloroplast. Involved in double-stranded DNA break repair. This chain is DNA repair RAD52-like protein 2, chloroplastic, found in Arabidopsis thaliana (Mouse-ear cress).